The primary structure comprises 584 residues: Membrane protein insertase YidC (584 aa).

The next 5 membrane-spanning stretches (helical) occupy residues 5-25 (SVIG…FMAP), 358-378 (FIGN…LVTY), 428-448 (LGGC…FYVF), 478-498 (IPLY…AVFL), and 516-536 (IYIF…GLGL). The segment at 563–584 (ALSPVVAAPPKAPKKKKNARKR) is disordered. Residues 574 to 584 (APKKKKNARKR) show a composition bias toward basic residues.

This sequence belongs to the OXA1/ALB3/YidC family. Type 1 subfamily. Interacts with the Sec translocase complex via SecD. Specifically interacts with transmembrane segments of nascent integral membrane proteins during membrane integration.

It localises to the cell inner membrane. In terms of biological role, required for the insertion and/or proper folding and/or complex formation of integral membrane proteins into the membrane. Involved in integration of membrane proteins that insert both dependently and independently of the Sec translocase complex, as well as at least some lipoproteins. Aids folding of multispanning membrane proteins. This is Membrane protein insertase YidC from Prosthecochloris aestuarii (strain DSM 271 / SK 413).